The following is a 536-amino-acid chain: Probable 1,4-beta-D-glucan cellobiohydrolase B (536 aa).

Positions 1–21 (MSSFQVYRAALLLSILATANA) are cleaved as a signal peptide. Residues 22–458 (QQVGTYTTET…SNIKFGPIGS (437 aa)) are catalytic. Glu233 functions as the Nucleophile in the catalytic mechanism. Glu238 serves as the catalytic Proton donor. Residues Asn351 and Asn414 are each glycosylated (N-linked (GlcNAc...) asparagine). Positions 459 to 500 (TYSSGSSSGSGSSSSSSSTTTKATSTTLKTTSTTSSGSSSTS) are ser/Thr-rich linker. The tract at residues 464–499 (SSSGSGSSSSSSSTTTKATSTTLKTTSTTSSGSSST) is disordered. The CBM1 domain maps to 500-536 (SAAQAYGQCGGQGWTGPTTCVSGYTCTYENAYYSQCL). 2 disulfide bridges follow: Cys508/Cys525 and Cys519/Cys535.

Belongs to the glycosyl hydrolase 7 (cellulase C) family.

The protein localises to the secreted. It carries out the reaction Hydrolysis of (1-&gt;4)-beta-D-glucosidic linkages in cellulose and cellotetraose, releasing cellobiose from the non-reducing ends of the chains.. Its function is as follows. The biological conversion of cellulose to glucose generally requires three types of hydrolytic enzymes: (1) Endoglucanases which cut internal beta-1,4-glucosidic bonds; (2) Exocellobiohydrolases that cut the disaccharide cellobiose from the non-reducing end of the cellulose polymer chain; (3) Beta-1,4-glucosidases which hydrolyze the cellobiose and other short cello-oligosaccharides to glucose. This chain is Probable 1,4-beta-D-glucan cellobiohydrolase B (cbhB), found in Aspergillus niger (strain ATCC MYA-4892 / CBS 513.88 / FGSC A1513).